The primary structure comprises 235 residues: 1-Cys peroxiredoxin (235 aa).

The 175-residue stretch at 5 to 179 folds into the Thioredoxin domain; the sequence is ILLGDKFPDF…ILRVVDSLQL (175 aa). Residue Cys-49 is part of the active site. Cys-49 serves as the catalytic Cysteine sulfenic acid (-SOH) intermediate.

Belongs to the peroxiredoxin family. Prx6 subfamily.

The protein localises to the cytoplasm. The enzyme catalyses a hydroperoxide + [protein]-dithiol = [protein]-disulfide + an alcohol + H2O. Functionally, thiol-specific peroxidase that catalyzes the reduction of hydrogen peroxide and organic hydroperoxides to water and alcohols, respectively. Plays a role in cell protection against oxidative stress by detoxifying peroxides. This Dirofilaria immitis (Canine heartworm) protein is 1-Cys peroxiredoxin.